The following is a 321-amino-acid chain: MAQLPPKIPNMTQHWPDFSSQKLSPFSTPTATAVATATTTVQNPSWVDEFLDFSASRRGNHRRSISDSIAFLEAPTVSIEDHQFDRFDDEQFMSMFTDDDNLHSNPSHINNKNNNVGPTGSSSNTSTPSNSFNDDNKELPPSDHNMNNNINNNYNDEVQSQCKMEPEDGTASNNNSGDSSGNRILDPKRVKRILANRQSAQRSRVRKLQYISELERSVTSLQAEVSVLSPRVAFLDHQRLLLNVDNSALKQRIAALSQDKLFKDAHQEALKREIERLRQVYNQQSLTNVENANHLSATGAGATPAVDIKSSVETEQLLNVS.

Residues 97–189 (TDDDNLHSNP…SGNRILDPKR (93 aa)) are disordered. Low complexity-rich tracts occupy residues 110–133 (NNKN…NSFN), 145–155 (NMNNNINNNYN), and 172–182 (SNNNSGDSSGN). In terms of domain architecture, bZIP spans 186–238 (DPKRVKRILANRQSAQRSRVRKLQYISELERSVTSLQAEVSVLSPRVAFLDHQ). The interval 188–207 (KRVKRILANRQSAQRSRVRK) is basic motif. The tract at residues 214 to 235 (LERSVTSLQAEVSVLSPRVAFL) is leucine-zipper.

Forms heterodimers with BZIP18, BZIP43 and VIP1/BZIP51. As to expression, expressed in vascular tissues of leaves, stems and siliques, anthers, filaments, tapetum, mature pollen grains, pistil vascular tissues and papillar cells, and funiculi.

The protein localises to the nucleus. Its function is as follows. Transcriptional activator involved in the sporophytic control of cell wall patterning and gametophytic control of pollen development. May play a role in the control of metabolic pathways regulating cellular transport and lipid metabolism. The chain is Basic leucine zipper 34 from Arabidopsis thaliana (Mouse-ear cress).